A 243-amino-acid polypeptide reads, in one-letter code: MADATPGAEYWTALGWQPSTEQVDQLATLQTLLREWNEKVNLTRLVEGDDYWINQVFDSLWPLAHELKTPHQPRTCIDVGTGGGFPGLAIAIALPGSHMTLLDSVGRKTAAVEAMASRLGLADRVAVRTERIETTGHDRACRGQFDLAMARAVAAAPVVAEYLVPLLKPKGEALLFRGQWSEEDTTEFSSVISPLKAQLTGVQTCQLPAKRGIRHLLRVQPIGSCPSSYPRAVGIPSRTPLGS.

S-adenosyl-L-methionine is bound by residues Gly80, Phe85, 132–133 (IE), and Arg151.

This sequence belongs to the methyltransferase superfamily. RNA methyltransferase RsmG family.

It localises to the cytoplasm. Its function is as follows. Specifically methylates the N7 position of a guanine in 16S rRNA. The chain is Ribosomal RNA small subunit methyltransferase G from Synechococcus sp. (strain CC9902).